The sequence spans 187 residues: UPF0340 protein SMU_87 (187 aa).

The protein belongs to the UPF0340 family.

In Streptococcus mutans serotype c (strain ATCC 700610 / UA159), this protein is UPF0340 protein SMU_87.